The primary structure comprises 153 residues: Deoxyuridine 5'-triphosphate nucleotidohydrolase (153 aa).

Residues 71–73, Asn84, 88–90, and Lys98 contribute to the substrate site; these read RSG and TID.

This sequence belongs to the dUTPase family. Requires Mg(2+) as cofactor.

It catalyses the reaction dUTP + H2O = dUMP + diphosphate + H(+). The protein operates within pyrimidine metabolism; dUMP biosynthesis; dUMP from dCTP (dUTP route): step 2/2. This enzyme is involved in nucleotide metabolism: it produces dUMP, the immediate precursor of thymidine nucleotides and it decreases the intracellular concentration of dUTP so that uracil cannot be incorporated into DNA. In Wolbachia pipientis wMel, this protein is Deoxyuridine 5'-triphosphate nucleotidohydrolase.